The primary structure comprises 107 residues: Putative double-stranded DNA mimic protein ECA2319 (107 aa).

It belongs to the putative dsDNA mimic protein family.

May act as a double-stranded DNA (dsDNA) mimic. Probably regulates the activity of a dsDNA-binding protein. The protein is Putative double-stranded DNA mimic protein ECA2319 of Pectobacterium atrosepticum (strain SCRI 1043 / ATCC BAA-672) (Erwinia carotovora subsp. atroseptica).